The chain runs to 257 residues: 7-carboxy-7-deazaguanine synthase (257 aa).

Residues 1–25 (MKSVDHPVDVLPAEHSAETPGDARA) form a disordered region. Substrate-binding positions include 39-41 (RQG) and Arg54. In terms of domain architecture, Radical SAM core spans 45–244 (LTGTESVFIR…AISRGYQYCD (200 aa)). [4Fe-4S] cluster contacts are provided by Cys58, Cys62, and Cys65. A Mg(2+)-binding site is contributed by Thr67. Thr99 serves as a coordination point for substrate. S-adenosyl-L-methionine contacts are provided by residues Gly101 and 143 to 145 (SPK).

It belongs to the radical SAM superfamily. 7-carboxy-7-deazaguanine synthase family. In terms of assembly, homodimer. [4Fe-4S] cluster serves as cofactor. Requires S-adenosyl-L-methionine as cofactor. Mg(2+) is required as a cofactor.

It catalyses the reaction 6-carboxy-5,6,7,8-tetrahydropterin + H(+) = 7-carboxy-7-deazaguanine + NH4(+). It participates in purine metabolism; 7-cyano-7-deazaguanine biosynthesis. Catalyzes the complex heterocyclic radical-mediated conversion of 6-carboxy-5,6,7,8-tetrahydropterin (CPH4) to 7-carboxy-7-deazaguanine (CDG), a step common to the biosynthetic pathways of all 7-deazapurine-containing compounds. This is 7-carboxy-7-deazaguanine synthase from Rhodopirellula baltica (strain DSM 10527 / NCIMB 13988 / SH1).